A 178-amino-acid polypeptide reads, in one-letter code: MHLKASLLDENAIRRALTRLSHEIIEKNKGVEDIVLVGIKRRGYPLAERLSEFIEKFEGVKIPVASVDITLYRDDLTNVSDTPNLNDPKIDVDIRGKKVIIVDDVLYTCRTARAAIDAIMDQGRPEFIQLAVLVDRGHKELPIRADYVGKNIPTSKDEIIKVQIKEIDGTDSVEIYEN.

The PRPP-binding signature appears at 99 to 111; sequence VIIVDDVLYTCRT.

Belongs to the purine/pyrimidine phosphoribosyltransferase family. PyrR subfamily. Homodimer and homohexamer; in equilibrium.

The catalysed reaction is UMP + diphosphate = 5-phospho-alpha-D-ribose 1-diphosphate + uracil. Functionally, regulates transcriptional attenuation of the pyrimidine nucleotide (pyr) operon by binding in a uridine-dependent manner to specific sites on pyr mRNA. This disrupts an antiterminator hairpin in the RNA and favors formation of a downstream transcription terminator, leading to a reduced expression of downstream genes. Also displays a weak uracil phosphoribosyltransferase activity which is not physiologically significant. The sequence is that of Bifunctional protein PyrR from Clostridium perfringens (strain ATCC 13124 / DSM 756 / JCM 1290 / NCIMB 6125 / NCTC 8237 / Type A).